The following is a 760-amino-acid chain: Metal transporter cnnm-2 (760 aa).

A signal peptide spans methionine 1–glycine 21. Topologically, residues lysine 22–cysteine 153 are extracellular. N-linked (GlcNAc...) asparagine glycosylation is present at asparagine 88. Positions threonine 145–leucine 323 constitute a CNNM transmembrane domain. The chain crosses the membrane as a helical span at residues alanine 154–methionine 174. The Cytoplasmic portion of the chain corresponds to alanine 175 to arginine 208. A helical transmembrane segment spans residues leucine 209 to aspartate 229. Aspartate 230 is a topological domain (extracellular). A helical membrane pass occupies residues leucine 231–isoleucine 251. The Cytoplasmic segment spans residues leucine 252–glycine 261. A helical membrane pass occupies residues leucine 262–isoleucine 282. Over threonine 283–glutamate 760 the chain is Extracellular. N-linked (GlcNAc...) asparagine glycans are attached at residues asparagine 302 and asparagine 403. 2 consecutive CBS domains span residues methionine 344 to valine 406 and methionine 442 to glutamate 512. Residues asparagine 528, asparagine 592, and asparagine 667 are each glycosylated (N-linked (GlcNAc...) asparagine). Residues aspartate 708 to valine 734 form a disordered region.

This sequence belongs to the ACDP family.

Its subcellular location is the cell membrane. In terms of biological role, probable metal transporter. Probably acts redundantly with the other metal transport proteins cnnm-1, cnnm-3, cnnm-4 and cnnm-5 to regulate Mg(2+) homeostasis. The polypeptide is Metal transporter cnnm-2 (Caenorhabditis elegans).